A 124-amino-acid chain; its full sequence is Putative iron-sulfur cluster insertion protein ErpA (124 aa).

Iron-sulfur cluster-binding residues include Cys52, Cys116, and Cys118.

This sequence belongs to the HesB/IscA family. Homodimer. Iron-sulfur cluster serves as cofactor.

Functionally, required for insertion of 4Fe-4S clusters. This is Putative iron-sulfur cluster insertion protein ErpA from Ralstonia pickettii (strain 12J).